Here is a 153-residue protein sequence, read N- to C-terminus: Transthyretin (153 aa).

Residues 1–24 (MAYYNTLALLTIFIFSGAFHRAQG) form the signal peptide. Residue C33 is modified to Sulfocysteine. K38, E77, and S140 together coordinate L-thyroxine.

The protein belongs to the transthyretin family. As to quaternary structure, homotetramer. Dimer of dimers. In the homotetramer, subunits assemble around a central channel that can accommodate two ligand molecules. Interacts with RBP4. In terms of processing, sulfonation of the reactive cysteine Cys-33 enhances the stability of the native conformation of TTR, avoiding misassembly of the protein leading to amyloid formation. In terms of tissue distribution, detected in plasma (at protein level). Expressed during metamorphosis in tadpole liver but not in tadpole brain, nor adult liver.

The protein localises to the secreted. Thyroid hormone-binding protein, with a much higher binding affinity for triiodothyronine (T3) than for thyroxine (T4). Probably transports triiodothyronine from the bloodstream to the brain. This chain is Transthyretin, found in Aquarana catesbeiana (American bullfrog).